Consider the following 209-residue polypeptide: Orotate phosphoribosyltransferase (209 aa).

5-phospho-alpha-D-ribose 1-diphosphate is bound by residues R96, K100, H102, and 122-130 (EDLISTGGS). An orotate-binding site is contributed by S126.

This sequence belongs to the purine/pyrimidine phosphoribosyltransferase family. PyrE subfamily. As to quaternary structure, homodimer. Requires Mg(2+) as cofactor.

The enzyme catalyses orotidine 5'-phosphate + diphosphate = orotate + 5-phospho-alpha-D-ribose 1-diphosphate. Its pathway is pyrimidine metabolism; UMP biosynthesis via de novo pathway; UMP from orotate: step 1/2. Functionally, catalyzes the transfer of a ribosyl phosphate group from 5-phosphoribose 1-diphosphate to orotate, leading to the formation of orotidine monophosphate (OMP). This is Orotate phosphoribosyltransferase from Streptococcus pyogenes serotype M3 (strain ATCC BAA-595 / MGAS315).